We begin with the raw amino-acid sequence, 77 residues long: Sec-independent protein translocase protein TatA (77 aa).

The chain crosses the membrane as a helical span at residues 1–21 (MGSFSIWHWLIVLVIVMLVFG). The segment at 40–77 (KDGMKEGNTDEPATPTPAKELRDSTTIDVEAKEKSRQQ) is disordered. Residues 58 to 77 (KELRDSTTIDVEAKEKSRQQ) show a composition bias toward basic and acidic residues.

This sequence belongs to the TatA/E family. The Tat system comprises two distinct complexes: a TatABC complex, containing multiple copies of TatA, TatB and TatC subunits, and a separate TatA complex, containing only TatA subunits. Substrates initially bind to the TatABC complex, which probably triggers association of the separate TatA complex to form the active translocon.

It is found in the cell inner membrane. Its function is as follows. Part of the twin-arginine translocation (Tat) system that transports large folded proteins containing a characteristic twin-arginine motif in their signal peptide across membranes. TatA could form the protein-conducting channel of the Tat system. The polypeptide is Sec-independent protein translocase protein TatA (Cupriavidus metallidurans (strain ATCC 43123 / DSM 2839 / NBRC 102507 / CH34) (Ralstonia metallidurans)).